A 178-amino-acid chain; its full sequence is Cytochrome b6-f complex iron-sulfur subunit (178 aa).

A helical transmembrane segment spans residues 20–42 (LLTFGTATGVALGALYPVANYFM). A Rieske domain is found at 65-161 (KTGWLATHQA…VDIEDDAVLV (97 aa)). Residues cysteine 107, histidine 109, cysteine 125, and histidine 128 each contribute to the [2Fe-2S] cluster site. Cysteine 112 and cysteine 127 are joined by a disulfide.

Belongs to the Rieske iron-sulfur protein family. In terms of assembly, the 4 large subunits of the cytochrome b6-f complex are cytochrome b6, subunit IV (17 kDa polypeptide, PetD), cytochrome f and the Rieske protein, while the 4 small subunits are PetG, PetL, PetM and PetN. The complex functions as a dimer. Requires [2Fe-2S] cluster as cofactor.

It localises to the cellular thylakoid membrane. It catalyses the reaction 2 oxidized [plastocyanin] + a plastoquinol + 2 H(+)(in) = 2 reduced [plastocyanin] + a plastoquinone + 4 H(+)(out). Component of the cytochrome b6-f complex, which mediates electron transfer between photosystem II (PSII) and photosystem I (PSI), cyclic electron flow around PSI, and state transitions. In Prochlorococcus marinus (strain MIT 9215), this protein is Cytochrome b6-f complex iron-sulfur subunit.